Consider the following 275-residue polypeptide: 2,3,4,5-tetrahydropyridine-2,6-dicarboxylate N-succinyltransferase (275 aa).

Positions 104 and 141 each coordinate substrate.

Belongs to the transferase hexapeptide repeat family. In terms of assembly, homotrimer.

It is found in the cytoplasm. It catalyses the reaction (S)-2,3,4,5-tetrahydrodipicolinate + succinyl-CoA + H2O = (S)-2-succinylamino-6-oxoheptanedioate + CoA. It participates in amino-acid biosynthesis; L-lysine biosynthesis via DAP pathway; LL-2,6-diaminopimelate from (S)-tetrahydrodipicolinate (succinylase route): step 1/3. The sequence is that of 2,3,4,5-tetrahydropyridine-2,6-dicarboxylate N-succinyltransferase from Mannheimia succiniciproducens (strain KCTC 0769BP / MBEL55E).